The following is a 284-amino-acid chain: NADH-cytochrome b5 reductase 1 (284 aa).

The helical transmembrane segment at 7–27 (KLVVVIVIVVVPLLFKFIIGP) threads the bilayer. The region spanning 38 to 142 (NDFQSFPLVE…KGPRGNYHYE (105 aa)) is the FAD-binding FR-type domain. 148–180 (HLGMIAGGTGIAPMYQIMKAIAMDSHDTTKVSL) lines the FAD pocket.

Belongs to the flavoprotein pyridine nucleotide cytochrome reductase family. As to quaternary structure, monomer. Component of the 2-(3-amino-3-carboxypropyl)histidine synthase complex composed of DPH1, DPH2, KTI11/DPH3 and a NADH-dependent reductase, predominantly CBR1. Interacts with KTI11/DPH3. Interacts with STE20. FAD is required as a cofactor.

The protein localises to the mitochondrion outer membrane. It carries out the reaction 2 Fe(III)-[cytochrome b5] + NADH = 2 Fe(II)-[cytochrome b5] + NAD(+) + H(+). The catalysed reaction is 2 Fe(3+)-[Dph3] + NADH = 2 Fe(2+)-[Dph3] + NAD(+) + H(+). It functions in the pathway protein modification; peptidyl-diphthamide biosynthesis. With respect to regulation, competitively inhibited by NAD(+). Inhibited by mercurials such as p-chloromercuribenzoate (PCMB) and HgCl(2). Enzymatic activity increases under anaerobic conditions. Functionally, NADH-dependent reductase for KTI11/DPH3 and cytochrome b5. Required for the first step of diphthamide biosynthesis, a post-translational modification of histidine which occurs in elongation factor 2. DPH1 and DPH2 transfer a 3-amino-3-carboxypropyl (ACP) group from S-adenosyl-L-methionine (SAM) to a histidine residue, the reaction is assisted by a reduction system comprising KTI11/DPH3 and a NADH-dependent reductase, predominantly CBR1. By reducing KTI11/DPH3, also involved in the formation of the tRNA wobble base modification mcm5s 2U (5-methoxycarbonylmethyl-2-thiouridine), mediated by the elongator complex. The cytochrome b5/NADH cytochrome b5 reductase electron transfer system supports the catalytic activity of several sterol biosynthetic enzymes. Plays a role in bud morphology. The protein is NADH-cytochrome b5 reductase 1 (CBR1) of Saccharomyces cerevisiae (strain YJM789) (Baker's yeast).